A 129-amino-acid polypeptide reads, in one-letter code: Replication initiation control protein YabA (129 aa).

4 residues coordinate Zn(2+): His103, Cys105, Cys119, and Cys122.

This sequence belongs to the YabA family. As to quaternary structure, homotetramer. Interacts with both DnaA and DnaN, acting as a bridge between these two proteins. The cofactor is Zn(2+).

The protein resides in the cytoplasm. The protein localises to the nucleoid. In terms of biological role, involved in control of chromosome replication initiation. Inhibits the cooperative binding of DnaA to the oriC region, thus negatively regulating initiation of chromosome replication. Inhibits the ability of DnaA-ATP to form a helix on DNA; does not disassemble preformed DnaA-DNA helices. Decreases the residence time of DnaA on the chromosome at its binding sites (oriC, replication forks and promoter-binding sites). Tethers DnaA to the replication machinery via the DNA polymerase beta sliding clamp subunit (dnaN). Associates with oriC and other DnaA targets on the chromosome in a DnaA-dependent manner. This Listeria innocua serovar 6a (strain ATCC BAA-680 / CLIP 11262) protein is Replication initiation control protein YabA.